A 412-amino-acid chain; its full sequence is MPHSTHKELLLGIMAGTAGISLLVLWYHKILKPRTTMIFPKFLSLGKKSDSLTLQDESYSEQGTSVVFQRGQLQILEKLNELLTNVEELKEEIKFLKETIPKLEECIQDELGVRVTVHQVSPQHRARKKKTTTTTVQRPATSNSSEEAESEGGYITANTDTEEQSFPVPKALNTHIEDLKLDVLLQKVDHLRLNEAHKMESFELLCDHKEKFSEEIEFLWRLVRAYGDMYDLSTNTQEKKHYANVGKTLGERAITRAPMNGHCHLWYALLCGYVSEFEGLQNKINCGHLFKKHLDIAIQLLPEEPVLYYLKGRYCYTVSKLSWIEKKMAATLFGEIPSSTVHEALHNFLKTEELQPGYSVSNYMYVAKCYVDLGESREAWKFCNLALLLPIVTKEDKDAHKEVKKIIGSLKR.

A helical membrane pass occupies residues 9–28 (LLLGIMAGTAGISLLVLWYH). Residue serine 51 is modified to Phosphoserine. Residues 72 to 110 (QLQILEKLNELLTNVEELKEEIKFLKETIPKLEECIQDE) adopt a coiled-coil conformation. At serine 121 the chain carries Phosphoserine. A disordered region spans residues 122 to 153 (PQHRARKKKTTTTTVQRPATSNSSEEAESEGG). Threonine 141 is subject to Phosphothreonine. Phosphotyrosine is present on tyrosine 154. A phosphothreonine mark is found at threonine 156 and threonine 159.

Belongs to the RMDN family. Interacts with microtubules.

The protein resides in the membrane. It localises to the cytoplasm. Its subcellular location is the cytoskeleton. It is found in the spindle. The protein localises to the spindle pole. This Rattus norvegicus (Rat) protein is Regulator of microtubule dynamics protein 2 (Rmdn2).